The chain runs to 442 residues: Elongation factor 1-gamma (442 aa).

Positions 2 to 87 (AAGTLYTYPE…YLSNDVLRGS (86 aa)) constitute a GST N-terminal domain. Positions 88 to 216 (TPQASAQVLQ…VKLCEKMAQF (129 aa)) constitute a GST C-terminal domain. Basic and acidic residues-rich tracts occupy residues 227-242 (KKEA…KEGG) and 249-263 (QEKK…KAAP). Residues 227 to 273 (KKEAPIKKEKGGKEGGKQQPQQQEKKEKKKEEKKAAPAEEEMDECEA) are disordered. The region spanning 281-442 (AKDPFAHLPK…KPFNQGKIFK (162 aa)) is the EF-1-gamma C-terminal domain.

EF-1 is composed of four subunits: alpha, beta, delta, and gamma.

In terms of biological role, probably plays a role in anchoring the complex to other cellular components. This chain is Elongation factor 1-gamma (eef1g), found in Danio rerio (Zebrafish).